Consider the following 655-residue polypeptide: p-hydroxybenzoic acid efflux pump subunit AaeB (655 aa).

The Periplasmic segment spans residues 1-12 (MGIFSIANQHIR). A helical transmembrane segment spans residues 13 to 33 (FAVKLATAIVLALFVGFHFQL). Residues 34–37 (ETPR) are Cytoplasmic-facing. A helical transmembrane segment spans residues 38–58 (WAVLTAAIVAAGPAFAAGGEP). Over 59–68 (YSGAIRYRGF) the chain is Periplasmic. A helical membrane pass occupies residues 69 to 89 (LRIIGTFIGCIAGLVIIIAMI). Over 90–92 (RAP) the chain is Cytoplasmic. The helical transmembrane segment at 93 to 113 (LLMILVCCIWAGFCTWISSLV) threads the bilayer. At 114 to 120 (RIENSYA) the chain is on the periplasmic side. A helical transmembrane segment spans residues 121–141 (WGLAGYTALIIVITIQPEPLL). The Cytoplasmic segment spans residues 142–151 (TPQFAVERCS). A helical membrane pass occupies residues 152–172 (EIVIGIVCAIMADLLFSPRSI). The Periplasmic portion of the chain corresponds to 173 to 369 (KQEVDRELES…RTTLSCILGT (197 aa)). Residues 370 to 390 (LFWLWTGWTSGSGAMVMIAVV) traverse the membrane as a helical segment. The Cytoplasmic portion of the chain corresponds to 391-406 (TSLAMRLPNPRMVAID). The chain crosses the membrane as a helical span at residues 407–427 (FIYGTLAALPLGLLYFLVIIP). At 428–430 (NTQ) the chain is on the periplasmic side. A helical transmembrane segment spans residues 431–451 (QSMLLLCISLAVLGFFLGIEV). Over 452–458 (QKRRLGS) the chain is Cytoplasmic. Residues 459–479 (MGALASTINIIVLDNPMTFHF) traverse the membrane as a helical segment. At 480–481 (SQ) the chain is on the periplasmic side. The chain crosses the membrane as a helical span at residues 482 to 502 (FLDSALGQIVGCVLAFTVILL). The Cytoplasmic segment spans residues 503 to 655 (VRDKSRDRTG…HKYQHALTDS (153 aa)).

This sequence belongs to the aromatic acid exporter ArAE (TC 2.A.85) family.

It localises to the cell inner membrane. In terms of biological role, forms an efflux pump with AaeA. Could function as a metabolic relief valve, allowing to eliminate certain compounds when they accumulate to high levels in the cell. In Shigella flexneri, this protein is p-hydroxybenzoic acid efflux pump subunit AaeB.